A 752-amino-acid polypeptide reads, in one-letter code: RNA-directed RNA polymerase catalytic subunit (752 aa).

2 short sequence motifs (nuclear localization signal) span residues 187 to 195 and 203 to 216; these read IKKKLPAKN and RIPM…TRVE. The interval 249-256 is promoter-binding site; sequence RGFVLVVE. The RdRp catalytic domain occupies 286 to 482; that stretch reads VAKMLSNCPP…GINMSKKKSY (197 aa).

Belongs to the influenza viruses polymerase PB1 family. Influenza RNA polymerase is composed of three subunits: PB1, PB2 and PA. Interacts (via N-terminus) with PA (via C-terminus). Interacts (via C-terminus) with PB2 (via N-terminus); this interaction is essential for transcription initiation. In terms of processing, phosphorylated by host PRKCA.

It is found in the host nucleus. Its subcellular location is the host cytoplasm. The catalysed reaction is RNA(n) + a ribonucleoside 5'-triphosphate = RNA(n+1) + diphosphate. In terms of biological role, RNA-dependent RNA polymerase which is responsible for replication and transcription of virus RNA segments. The transcription of viral mRNAs occurs by a unique mechanism called cap-snatching. 5' methylated caps of cellular mRNAs are cleaved after 10-13 nucleotides by PA. In turn, these short capped RNAs are used as primers by PB1 for transcription of viral mRNAs. During virus replication, PB1 initiates RNA synthesis and copy vRNA into complementary RNA (cRNA) which in turn serves as a template for the production of more vRNAs. The polypeptide is RNA-directed RNA polymerase catalytic subunit (Influenza B virus (strain B/Ann Arbor/1/1966 [wild-type])).